The chain runs to 94 residues: MNKAEFIDLVKEAGKYNSKREAEEAISAFTLAVETALSKGESVELIGFGKFETAEQKGKEGKVPGSDKTYKTEDKRVPKFKPGKTLKQKVEEGK.

The interval Gln56 to Lys94 is disordered. The segment covering Lys68–Val77 has biased composition (basic and acidic residues). Over residues Pro78–Lys87 the composition is skewed to basic residues.

It belongs to the bacterial histone-like protein family. As to quaternary structure, homodimer.

In terms of biological role, histone-like DNA-binding protein which is capable of wrapping DNA to stabilize it, and thus to prevent its denaturation under extreme environmental conditions. The sequence is that of DNA-binding protein HU (hup) from Helicobacter pylori (strain ATCC 700392 / 26695) (Campylobacter pylori).